The sequence spans 75 residues: Probable pilin MJ1469 (75 aa).

A propeptide spanning residues 1-11 (MKPKKIISNKA) is cleaved from the precursor. The QXSXEXXXL signature appears at 12 to 20 (QISLELALL).

In terms of processing, the N-terminus is cleaved by the prepilin peptidase EppA, which recognizes the class III signal sequence.

The protein resides in the secreted. Its subcellular location is the cell surface. It is found in the fimbrium. The protein is Probable pilin MJ1469 of Methanocaldococcus jannaschii (strain ATCC 43067 / DSM 2661 / JAL-1 / JCM 10045 / NBRC 100440) (Methanococcus jannaschii).